Here is a 662-residue protein sequence, read N- to C-terminus: NADH-ubiquinone oxidoreductase chain 5 (662 aa).

The next 16 helical transmembrane spans lie at 40-62 (AALSIVAFYEVGLSGSPVSIVIG), 77-99 (LFDSLTVSMLLPVLIVSSLVHLY), 112-129 (RFFSYLSMFTFFMLVLVA), 133-155 (YFIMFVGWEGIGISSYLLINFWY), 168-190 (LTVNRVGDMFLSVGFFAIFWVFG), 200-222 (VAPYINETAITIIGLLLLVGAMA), 243-262 (VSALIHAATLVTAGVYLMLR), 272-294 (TVLVVITWVGALTAFFAATTGLL), 301-320 (VIAYSTCSQMGYLFMAVGLS), 325-347 (ALFHLVNHAFFKALLFLAAGAVI), 360-382 (GGLVNFLPFTYTAILIGSLSLMA), 408-430 (TIAYWLGTISAVFTAFYSFRLVS), 450-472 (APMIIVIPLVILSIMSIVFGYIA), 510-529 (LLPAIGSLFGAGLALYLYHV), 609-631 (GVITSYALYIMLGLVSLIFLVFA), and 636-658 (VFNEYGLSLILVYLSALVLLPSS).

The protein belongs to the complex I subunit 5 family.

It is found in the mitochondrion inner membrane. The enzyme catalyses a ubiquinone + NADH + 5 H(+)(in) = a ubiquinol + NAD(+) + 4 H(+)(out). Core subunit of the mitochondrial membrane respiratory chain NADH dehydrogenase (Complex I) that is believed to belong to the minimal assembly required for catalysis. Complex I functions in the transfer of electrons from NADH to the respiratory chain. The immediate electron acceptor for the enzyme is believed to be ubiquinone. This chain is NADH-ubiquinone oxidoreductase chain 5 (ND5), found in Cryptococcus neoformans var. grubii serotype A (strain H99 / ATCC 208821 / CBS 10515 / FGSC 9487) (Filobasidiella neoformans var. grubii).